Reading from the N-terminus, the 257-residue chain is uncharacterized protein (257 aa).

Asn-61, Asn-95, Asn-102, Asn-111, Asn-139, Asn-148, and Asn-152 each carry an N-linked (GlcNAc...) asparagine; by host glycan. Residues 233–253 (WYIIGGIFWVIVLIILVIFII) form a helical membrane-spanning segment.

Its subcellular location is the host membrane. The protein localises to the virion. This is an uncharacterized protein from Acanthamoeba polyphaga (Amoeba).